The following is a 432-amino-acid chain: Adenylosuccinate synthetase 2 (432 aa).

Residues 12–18 (GDEGKGR) and 40–42 (GHT) each bind GTP. D13 functions as the Proton acceptor in the catalytic mechanism. Mg(2+) is bound by residues D13 and G40. IMP-binding positions include 13–16 (DEGK), 38–41 (NAGH), T128, R142, Q222, T237, and R301. H41 serves as the catalytic Proton donor. 297-303 (VNTGRPR) is a substrate binding site. Residues R303, 329–331 (KLD), and 411–413 (TTG) each bind GTP.

This sequence belongs to the adenylosuccinate synthetase family. As to quaternary structure, homodimer. It depends on Mg(2+) as a cofactor.

Its subcellular location is the cytoplasm. It carries out the reaction IMP + L-aspartate + GTP = N(6)-(1,2-dicarboxyethyl)-AMP + GDP + phosphate + 2 H(+). It participates in purine metabolism; AMP biosynthesis via de novo pathway; AMP from IMP: step 1/2. Plays an important role in the de novo pathway of purine nucleotide biosynthesis. Catalyzes the first committed step in the biosynthesis of AMP from IMP. The sequence is that of Adenylosuccinate synthetase 2 from Burkholderia lata (strain ATCC 17760 / DSM 23089 / LMG 22485 / NCIMB 9086 / R18194 / 383).